A 512-amino-acid chain; its full sequence is 2,3-bisphosphoglycerate-independent phosphoglycerate mutase (512 aa).

Mn(2+) contacts are provided by aspartate 11 and serine 61. Serine 61 serves as the catalytic Phosphoserine intermediate. Residues histidine 122, 152-153 (RD), arginine 184, arginine 190, 259-262 (RADR), and lysine 332 each bind substrate. 5 residues coordinate Mn(2+): aspartate 399, histidine 403, aspartate 440, histidine 441, and histidine 459.

This sequence belongs to the BPG-independent phosphoglycerate mutase family. Monomer. Mn(2+) is required as a cofactor.

It catalyses the reaction (2R)-2-phosphoglycerate = (2R)-3-phosphoglycerate. It functions in the pathway carbohydrate degradation; glycolysis; pyruvate from D-glyceraldehyde 3-phosphate: step 3/5. Its function is as follows. Catalyzes the interconversion of 2-phosphoglycerate and 3-phosphoglycerate. In Francisella tularensis subsp. holarctica (strain FTNF002-00 / FTA), this protein is 2,3-bisphosphoglycerate-independent phosphoglycerate mutase.